Consider the following 205-residue polypeptide: Rho GDP-dissociation inhibitor (205 aa).

A compositionally biased stretch (polar residues) spans 1–11 (MSVNNEVSADQ). Residues 1-31 (MSVNNEVSADQHNPELEDDTFEHGPPVSLGE) are disordered. Ser-63 bears the Phosphoserine mark.

Belongs to the Rho GDI family.

Its subcellular location is the cytoplasm. It is found in the nucleus. In terms of biological role, regulates the GDP/GTP exchange reaction of the Rho proteins by inhibiting the dissociation of GDP from them, and the subsequent binding of GTP to them. This chain is Rho GDP-dissociation inhibitor, found in Schizosaccharomyces pombe (strain 972 / ATCC 24843) (Fission yeast).